A 663-amino-acid polypeptide reads, in one-letter code: Pyoverdine export ATP-binding/permease protein PvdT (663 aa).

The ABC transporter domain maps to isoleucine 11–glutamine 250. An ATP-binding site is contributed by glycine 48 to serine 55. Transmembrane regions (helical) follow at residues alanine 292–glycine 312, isoleucine 545–valine 565, valine 598–glycine 618, and leucine 626–methionine 646.

It belongs to the ABC transporter superfamily. Macrolide exporter (TC 3.A.1.122) family. Part of the tripartite efflux system PvdRT-OpmQ, which is composed of an inner membrane component with both ATPase and permease domains, PvdT, a periplasmic membrane fusion protein, PvdR, and an outer membrane component, OpmQ.

It localises to the cell inner membrane. Part of the tripartite efflux system PvdRT-OpmQ required for the secretion into the extracellular milieu of the siderophore pyoverdine (PVD), which is involved in iron acquisition. This subunit binds PVD and drives its secretion by hydrolyzing ATP. The system is responsible for export of newly synthesized PVD after the final steps of biosynthesis have taken place in the periplasm. It is also responsible for recycling of PVD after internalization of ferri-PVD into the periplasm by the outer-membrane receptor FpvA and release of iron from PVD, thus making PVD available for new cycles of iron uptake. In addition, can expel unwanted metals complexed with PVD from the periplasm into the extracellular medium. The sequence is that of Pyoverdine export ATP-binding/permease protein PvdT from Pseudomonas aeruginosa (strain ATCC 15692 / DSM 22644 / CIP 104116 / JCM 14847 / LMG 12228 / 1C / PRS 101 / PAO1).